The chain runs to 77 residues: MLPPVRCFTCGRPLGHLWPRFRELVASGKTPGEALDELGVDRYCCRRTLFTSVTYIEHAAKYRVGIHVPPERLKMWG.

Zn(2+) is bound by residues cysteine 7, cysteine 10, cysteine 44, and cysteine 45.

The protein belongs to the archaeal Rpo10/eukaryotic RPB10 RNA polymerase subunit family. As to quaternary structure, part of the RNA polymerase complex. The cofactor is Zn(2+).

Its subcellular location is the cytoplasm. It carries out the reaction RNA(n) + a ribonucleoside 5'-triphosphate = RNA(n+1) + diphosphate. Its function is as follows. DNA-dependent RNA polymerase (RNAP) catalyzes the transcription of DNA into RNA using the four ribonucleoside triphosphates as substrates. The polypeptide is DNA-directed RNA polymerase subunit Rpo10 (Aeropyrum pernix (strain ATCC 700893 / DSM 11879 / JCM 9820 / NBRC 100138 / K1)).